Reading from the N-terminus, the 220-residue chain is Recombination protein RecR (220 aa).

Residues 57-72 form a C4-type zinc finger; sequence CPICFNITDAEKCDVC. The Toprim domain maps to 80–173; it reads RTICVVEEPG…AISRIAYGVP (94 aa). A disordered region spans residues 190–220; sequence LTGRQTVSKPQPPQRPGDEDGADGAAVPASR.

Belongs to the RecR family.

Functionally, may play a role in DNA repair. It seems to be involved in an RecBC-independent recombinational process of DNA repair. It may act with RecF and RecO. The polypeptide is Recombination protein RecR (Deinococcus radiodurans (strain ATCC 13939 / DSM 20539 / JCM 16871 / CCUG 27074 / LMG 4051 / NBRC 15346 / NCIMB 9279 / VKM B-1422 / R1)).